The chain runs to 611 residues: Mitochondrial import receptor subunit TOM70 (611 aa).

Alanine 2 carries the N-acetylalanine modification. At 2–41 (AASKPIEAAMAAAAAPGSGNGVGGGGGTAGPGSGAGTLPR) the chain is on the mitochondrial intermembrane side. The helical transmembrane segment at 42–62 (WHVALAIGAPLLLGAGAMYLW) threads the bilayer. Over 63 to 611 (SRRRRRREAG…KKYGLKPPTL (549 aa)) the chain is Cytoplasmic. A disordered region spans residues 69–110 (REAGGRGDASGLKRNSERKTPEGRASPALGSGHHDGSGDSLE). Position 74 is an omega-N-methylarginine (arginine 74). A phosphoserine mark is found at serine 94, serine 99, serine 105, serine 108, and serine 113. TPR repeat units follow at residues 117 to 150 (AQAAKNKGNKYFKAGKYEQAIQCYTEAISLCPTE) and 156 to 189 (STFYQNRAAAFEQLQKWKEVAQDCTKAVELNPKY). An N6-acetyllysine modification is found at lysine 188. Lysine 278 participates in a covalent cross-link: Glycyl lysine isopeptide (Lys-Gly) (interchain with G-Cter in SUMO2). TPR repeat units lie at residues 297 to 330 (ENSGYLKAKQYMEEENYDKIISECSKEIDAQGKY), 332 to 365 (AEALLLRATFYLLIGSANAAKPDLDKVISLKEAN), 370 to 403 (ANALIKRGTMCMQQQQPMLSTQDFNMAAEIDPMN), 404 to 437 (SDVYHHRGQLKILLDLVEEAVADFDACIRLRPKF), 445 to 478 (CFALYRQAYTANNSSQVQAAMKGFEEIIKKFPRC), 479 to 512 (AEGYALYAQALTDQQQFGKADEMYDKCIDLEPDN), 514 to 547 (TTYVHKGLLQLQWKQDLDKGLELISKAIEIDNKC), and 548 to 581 (DFAYETMGTIEVQRGNMEKAIDMFNKAINLAKSE).

Belongs to the Tom70 family. In terms of assembly, forms part of the preprotein translocase complex of the outer mitochondrial membrane (TOM complex) which consists of at least 7 different proteins (TOMM5, TOMM6, TOMM7, TOMM20, TOMM22, TOMM40 and TOMM70). Interacts with CAPN8. Interacts with TRADD, TRAF6 and STING. Interacts with MAVS. Interacts with HSPA8 and HSP90AA1; both interactions are required for preprotein mitochondrial import. The interaction with HSP90AA1 is direct and mediates the association of TOMM70 with IRF3 and TBK1. Upon mitochondrial depolarization, interacts with PINK1; the interaction is required for PINK1-TOM-TIM23 supercomplex formation which is critical for PINK1 stabilization at the outer mitochondrial membrane, kinase activation and downstream mitophagy. Expressed in the base region of the oxyntic and pyloric mucosae.

The protein resides in the mitochondrion outer membrane. Its function is as follows. Acts as a receptor of the preprotein translocase complex of the outer mitochondrial membrane (TOM complex). Recognizes and mediates the translocation of mitochondrial preproteins from the cytosol into the mitochondria in a chaperone dependent manner. Mediates TBK1 and IRF3 activation induced by MAVS in response to virus infection and promotes host antiviral responses during virus infection. The protein is Mitochondrial import receptor subunit TOM70 of Mus musculus (Mouse).